The chain runs to 287 residues: Toxin zeta (287 aa).

Residue 40-47 coordinates ATP; the sequence is GQPGSGKT. Residues 250–287 form a disordered region; that stretch reads MVQNQHQETPEFKAIQQKMESLQPPTPPIPKTPKLPGI. The segment covering 273–287 has biased composition (pro residues); sequence PPTPPIPKTPKLPGI.

This sequence belongs to the zeta toxin family. In terms of assembly, in the presence of the epsilon antitoxin, forms an inactive PezA(2)PezT(2) heterotetramer.

The enzyme catalyses UDP-N-acetyl-alpha-D-glucosamine + ATP = UDP-N-acetyl-alpha-D-glucosamine 3'-phosphate + ADP + H(+). Functionally, toxic component of a type II toxin-antitoxin (TA) system. Phosphorylates UDP-N-acetyl-D-glucosamine (UNAG) on the 3'-hydroxyl group of the N-acetyl-D-glucosamine moiety, yielding UNAG-3P. UNAG-3P inhibits MurA, the first committed step in cell wall synthesis, which is then blocked. Phosphorylation is inhibited by cognate epsilon antitoxin. Part of a postsegregational killing (PSK) system involved in the killing of plasmid-free cells. The zeta toxin induces programmed cell death. In Streptococcus agalactiae, this protein is Toxin zeta.